Here is a 156-residue protein sequence, read N- to C-terminus: Small ribosomal subunit protein uS7 (156 aa).

Belongs to the universal ribosomal protein uS7 family. As to quaternary structure, part of the 30S ribosomal subunit. Contacts proteins S9 and S11.

In terms of biological role, one of the primary rRNA binding proteins, it binds directly to 16S rRNA where it nucleates assembly of the head domain of the 30S subunit. Is located at the subunit interface close to the decoding center, probably blocks exit of the E-site tRNA. The polypeptide is Small ribosomal subunit protein uS7 (Desulfosudis oleivorans (strain DSM 6200 / JCM 39069 / Hxd3) (Desulfococcus oleovorans)).